Reading from the N-terminus, the 282-residue chain is tRNA N(3)-cytidine methyltransferase METTL6 (282 aa).

Residues Trp45, Tyr49, Gly87, Asp110, Asp136, Leu137, and Ile157 each coordinate S-adenosyl-L-methionine.

Belongs to the methyltransferase superfamily. METL family. As to quaternary structure, monomer. Interacts with SARS1/SerRS; interaction is mediated via tRNA(Ser) and is required for N(3)-methylcytidine methylation.

It is found in the cytoplasm. Its subcellular location is the nucleus. It catalyses the reaction cytidine(32) in tRNA(Ser) + S-adenosyl-L-methionine = N(3)-methylcytidine(32) in tRNA(Ser) + S-adenosyl-L-homocysteine + H(+). Its function is as follows. S-adenosyl-L-methionine-dependent methyltransferase that mediates N(3)-methylcytidine modification of residue 32 of the tRNA anticodon loop of tRNA(Ser), including tRNA(Ser)(UGA) and tRNA(Ser)(GCU). Interaction with SARS1/SerRS is required for N(3)-methylcytidine methylation. This chain is tRNA N(3)-cytidine methyltransferase METTL6, found in Mus musculus (Mouse).